Consider the following 483-residue polypeptide: MADSIQPEKHIHFIGMGGIGMSALALILAERGHSVSGSDRKLTPAMQALETKALAIFESQVSKNFAHLQSRGIEEPLVVVSTAIPSTNPELIEAQRLDLTIWHRSDLLAWLIEQQPSIAVAGSHGKTTTSTVLTTLLATVGEDPTAVIGGVVPCYGSNGHKGNGRLLVAEADESDGSLVKFKASLGIITNLELDHTDHYRNLDDLIETMKTFGRGCKRLLINHDDPILKEHFQADACWSVHHVETADYAALPVQLDGDRTIADYFEQGQKVGQITLPLPGLHNLSNVVAALAACRMEGVPLEALLLAVTELRSPGRRFDFRGEWQDRQVVDDYAHHPSEVQATLTMAQLMVQSGRSPLPRTPQRLLAVFQPHRYSRTQEFLNAFAQALVSADALVLAPIYGAGEQPIEGINSELLARSIRLIDPNQPVFVASTMEELAGLVKQHSQPDDLILAMGAGDVNSLWERLSQEGIGGEASCSPAIAA.

ATP is bound at residue 122 to 128 (GSHGKTT).

The protein belongs to the MurCDEF family.

Its subcellular location is the cytoplasm. It catalyses the reaction UDP-N-acetyl-alpha-D-muramate + L-alanine + ATP = UDP-N-acetyl-alpha-D-muramoyl-L-alanine + ADP + phosphate + H(+). It participates in cell wall biogenesis; peptidoglycan biosynthesis. Its function is as follows. Cell wall formation. The chain is UDP-N-acetylmuramate--L-alanine ligase from Synechococcus sp. (strain CC9311).